A 263-amino-acid polypeptide reads, in one-letter code: Receptor expression-enhancing protein 3-A (263 aa).

A run of 2 helical transmembrane segments spans residues 2-22 (VSWIICKAVVLVFGMLYPAYF) and 35-55 (YVRWMMYWIVFALYTVTEAIA). Disordered stretches follow at residues 161 to 228 (GDET…SMRS) and 240 to 263 (YASLKHKPKKRPQLYFREDTAHHL). Acidic residues predominate over residues 199–214 (DDNTDEDVEVNSEDEV). Positions 242–251 (SLKHKPKKRP) are enriched in basic residues.

This sequence belongs to the DP1 family.

The protein localises to the endoplasmic reticulum membrane. Microtubule-binding protein required to ensure proper cell division and nuclear envelope reassembly by sequestering the endoplasmic reticulum away from chromosomes during mitosis. Probably acts by clearing the endoplasmic reticulum membrane from metaphase chromosomes. The polypeptide is Receptor expression-enhancing protein 3-A (reep3-a) (Xenopus laevis (African clawed frog)).